The chain runs to 304 residues: Uricase (304 aa).

Ala2 is subject to N-acetylalanine. Lys10 and Lys23 each carry N6-acetyllysine; alternate. N6-succinyllysine; alternate is present on residues Lys10 and Lys23. Residue Lys23 is the Charge relay system of the active site. Residues Lys27 and Lys36 each carry the N6-acetyllysine modification. Ser39 and Ser63 each carry phosphoserine. Thr68 (charge relay system) is an active-site residue. Urate is bound by residues Thr68 and Asp69. An N6-acetyllysine mark is found at Lys118, Lys122, and Lys164. Phe170 is a urate binding site. 2 positions are modified to N6-acetyllysine: Lys175 and Lys185. Arg187 is a binding site for urate. An N6-acetyllysine; alternate mark is found at Lys221 and Lys228. N6-succinyllysine; alternate occurs at positions 221 and 228. The residue at position 232 (Ser232) is a Phosphoserine. The urate site is built by Val235, Gln236, and Asn262. The active-site Charge relay system is His264. N6-acetyllysine is present on Lys278. Tyr289 is modified (phosphotyrosine). Positions Ser302–Leu304 match the Microbody targeting signal motif.

The protein belongs to the uricase family. As to quaternary structure, homotetramer.

The protein resides in the peroxisome. It carries out the reaction urate + O2 + H2O = 5-hydroxyisourate + H2O2. It participates in purine metabolism; urate degradation; (S)-allantoin from urate: step 1/3. Catalyzes the oxidation of uric acid to 5-hydroxyisourate, which is further processed to form (S)-allantoin. This Sus scrofa (Pig) protein is Uricase (UOX).